Consider the following 284-residue polypeptide: Trimeric intracellular cation channel type B-A (284 aa).

Over 1–15 (MESLSELSVQFSQLS) the chain is Lumenal. Residues 16-33 (MFPFFDMAHYVVSVMSAR) form a helical membrane-spanning segment. The Cytoplasmic portion of the chain corresponds to 34–46 (EQAGALDIAARSP). A helical transmembrane segment spans residues 47 to 68 (MASWFSAMLYCFGGGILSSILL). Residues 69 to 79 (AEPPIAVLSNT) are Lumenal-facing. Residues 80–99 (TNIMLASTIWYMVYYFPYDL) traverse the membrane as a helical segment. Residues 100-102 (FYN) are Cytoplasmic-facing. Residues 103–121 (CFFFLPIRLIIAGMKEVTR) traverse the membrane as a helical segment. A 1,2-diacyl-sn-glycero-3-phospho-(1D-myo-inositol-4,5-bisphosphate)-binding residues include lysine 117 and arginine 121. The Lumenal portion of the chain corresponds to 122 to 137 (TWKILSGVTHAHSHYK). A helical membrane pass occupies residues 138–155 (DALLVMITIGWARGAGGG). Residues 156–177 (LISNFEQLVRGVWKPESNEFLK) lie on the Cytoplasmic side of the membrane. Residues 178–195 (MSYPVKVTLIGAVLFTLQ) traverse the membrane as a helical segment. Over 196-206 (HGHYLPISRHN) the chain is Lumenal. A helical membrane pass occupies residues 207–224 (LMLIYTMFLVLIKVTMML). Over 225-284 (THSTASPFLPLETPLQRILFGQRQKPSEVRQSASSSGAKGKPSKKTLDKDSGEQSKKKDS) the chain is Cytoplasmic. Positions 246-284 (QRQKPSEVRQSASSSGAKGKPSKKTLDKDSGEQSKKKDS) are disordered. Basic and acidic residues predominate over residues 269 to 284 (KTLDKDSGEQSKKKDS).

Belongs to the TMEM38 family. As to quaternary structure, homotrimer; conformation seems to be controled by binding to diacylglycerol (DAG).

The protein localises to the endoplasmic reticulum membrane. The enzyme catalyses K(+)(in) = K(+)(out). Channel activity is activated by increased cytosolic Ca(2+) levels and blocked by luminal high Ca(2+) levels. Functionally, intracellular monovalent cation channel required for maintenance of rapid intracellular calcium release. Acts as a potassium counter-ion channel that functions in synchronization with calcium release from intracellular stores. Activated by increased cytosolic Ca(2+) levels. The protein is Trimeric intracellular cation channel type B-A (tmem38b-a) of Xenopus laevis (African clawed frog).